A 130-amino-acid chain; its full sequence is Metastasis-suppressor KiSS-1 (130 aa).

Residues 1-19 form the signal peptide; sequence MISMASWQLLLLLCVATYG. Positions 49-82 are disordered; that stretch reads KESRYAESKPGSAGLRARRSSPCPPVEGPAGRQR. A disulfide bond links C71 and C85. Phosphotyrosine is present on Y110. Positions 110–119 are essential for receptor binding and receptor activation; that stretch reads YNWNSFGLRY. Y119 is subject to Tyrosine amide.

Belongs to the KISS1 family. As to expression, weak in all tissue types with highest levels in lung and 15- 17-day embryos. Expressed in areas of the hypothalamus implicated in the neuroendocrine regulation of gonadotropin secretion, including the anteroventral periventricular nucleus, the periventricular nucleus, and the arcuate nucleus.

It localises to the secreted. Its function is as follows. Metastasis suppressor protein. May regulate events downstream of cell-matrix adhesion, perhaps involving cytoskeletal reorganization. Generates a C-terminally amidated peptide, metastin which functions as the endogenous ligand of the G-protein coupled receptor GPR54. Activation of the receptor inhibits cell proliferation and cell migration, key characteristics of tumor metastasis. The receptor is also essential for normal gonadotropin-released hormone physiology and for puberty. The hypothalamic KiSS1/GPR54 system is a pivotal factor in central regulation of the gonadotropic axis at puberty and in adulthood. Intracerebroventricular administration induces an increase in serum LH and FSH levels in prepubertal male and female as well as in adult animals. This is Metastasis-suppressor KiSS-1 (Kiss1) from Mus musculus (Mouse).